A 210-amino-acid polypeptide reads, in one-letter code: ATP phosphoribosyltransferase (210 aa).

Belongs to the ATP phosphoribosyltransferase family. Short subfamily. In terms of assembly, heteromultimer composed of HisG and HisZ subunits.

The protein localises to the cytoplasm. The enzyme catalyses 1-(5-phospho-beta-D-ribosyl)-ATP + diphosphate = 5-phospho-alpha-D-ribose 1-diphosphate + ATP. The protein operates within amino-acid biosynthesis; L-histidine biosynthesis; L-histidine from 5-phospho-alpha-D-ribose 1-diphosphate: step 1/9. Functionally, catalyzes the condensation of ATP and 5-phosphoribose 1-diphosphate to form N'-(5'-phosphoribosyl)-ATP (PR-ATP). Has a crucial role in the pathway because the rate of histidine biosynthesis seems to be controlled primarily by regulation of HisG enzymatic activity. This Caldanaerobacter subterraneus subsp. tengcongensis (strain DSM 15242 / JCM 11007 / NBRC 100824 / MB4) (Thermoanaerobacter tengcongensis) protein is ATP phosphoribosyltransferase.